Here is an 83-residue protein sequence, read N- to C-terminus: Small ribosomal subunit protein uS17 (83 aa).

The protein belongs to the universal ribosomal protein uS17 family. As to quaternary structure, part of the 30S ribosomal subunit.

Functionally, one of the primary rRNA binding proteins, it binds specifically to the 5'-end of 16S ribosomal RNA. The protein is Small ribosomal subunit protein uS17 of Francisella tularensis subsp. holarctica (strain FTNF002-00 / FTA).